Here is a 303-residue protein sequence, read N- to C-terminus: MSVRHFTDLSTVSEGDLRFMLDDAVVRKARLKAGERTRPLEGKVLAMIFDKPSTRTRVSFDVGMRQLGGETIMLTGTEMQLGRSETIADTAKVLSRYVDAIMIRTTSHDRLLELTENATVPVINGLTDDTHPCQLMADIMTFEEHRGPVAGKTIAWTGDGNNVLHSLLEASARFRFNLNVAVPEGSEPAQKHIDWSKAHGGKLHFTRSPEEAVDQADCVVTDCWVSMGQEHRARGHNVFSPYQVNAKLMAHAKPDALFMHCLPAHRGEEVTDEVIDGPHSVVFDEAENRLHAQKAVLAWCLGA.

Carbamoyl phosphate is bound by residues 53–56 (STRT), Q80, R104, and 131–134 (HPCQ). L-ornithine contacts are provided by residues N162, D222, and 226 to 227 (SM). Carbamoyl phosphate-binding positions include 261 to 262 (CL) and R289.

This sequence belongs to the aspartate/ornithine carbamoyltransferase superfamily. OTCase family.

The protein resides in the cytoplasm. It catalyses the reaction carbamoyl phosphate + L-ornithine = L-citrulline + phosphate + H(+). Its pathway is amino-acid biosynthesis; L-arginine biosynthesis; L-arginine from L-ornithine and carbamoyl phosphate: step 1/3. Reversibly catalyzes the transfer of the carbamoyl group from carbamoyl phosphate (CP) to the N(epsilon) atom of ornithine (ORN) to produce L-citrulline. The protein is Ornithine carbamoyltransferase of Mesorhizobium japonicum (strain LMG 29417 / CECT 9101 / MAFF 303099) (Mesorhizobium loti (strain MAFF 303099)).